Reading from the N-terminus, the 342-residue chain is P21 prophage-derived major head protein (342 aa).

It belongs to the lambda phage major capsid protein family.

The chain is P21 prophage-derived major head protein from Escherichia coli O6:H1 (strain CFT073 / ATCC 700928 / UPEC).